Here is a 317-residue protein sequence, read N- to C-terminus: Olfactory receptor 1B1 (317 aa).

Residues 1–29 (MSFAPNASHSPVFLLLGFSRANISYTLLF) are Extracellular-facing. Asn-6 and Asn-22 each carry an N-linked (GlcNAc...) asparagine glycan. Residues 30-50 (FLFLAIYLTTILGNVTLVLLI) form a helical membrane-spanning segment. Residues 51–66 (SWDSRLHSPMYYLLRG) are Cytoplasmic-facing. Residues 67–87 (LSVIDMGLSTVTLPQLLAHLV) traverse the membrane as a helical segment. Topologically, residues 88 to 98 (SHYPTIPAARC) are extracellular. Residues Cys-98 and Cys-184 are joined by a disulfide bond. The chain crosses the membrane as a helical span at residues 99–119 (LAQFFFFYAFGVTDTLVIAVM). Topologically, residues 120–144 (ALDRYVAICDPLHYALVMNHQRCAC) are cytoplasmic. Residues 145-165 (LLALSWVVSILHTMLRVGLVL) form a helical membrane-spanning segment. The Extracellular portion of the chain corresponds to 166–201 (PLCWTGDAGGNVNLPHFFCDHRPLLRASCSDIHSNE). The helical transmembrane segment at 202-222 (LAIFFEGGFLMLGPCALIVLS) threads the bilayer. Over 223–248 (YVRIGAAILRLPSAAGRRRAVSTCGS) the chain is Cytoplasmic. The chain crosses the membrane as a helical span at residues 249-269 (HLTMVGFLYGTIICVYFQPPF). Topologically, residues 270-276 (QNSQYQD) are extracellular. The helical transmembrane segment at 277–297 (MVASVMYTAITPLANPFVYSL) threads the bilayer. The Cytoplasmic segment spans residues 298 to 317 (HNKDVKGALCRLLEWVKVDP).

Belongs to the G-protein coupled receptor 1 family.

It localises to the cell membrane. Its function is as follows. Odorant receptor. In Homo sapiens (Human), this protein is Olfactory receptor 1B1 (OR1B1).